The primary structure comprises 145 residues: Large ribosomal subunit protein uL13 (145 aa).

The protein belongs to the universal ribosomal protein uL13 family. As to quaternary structure, part of the 50S ribosomal subunit.

Functionally, this protein is one of the early assembly proteins of the 50S ribosomal subunit, although it is not seen to bind rRNA by itself. It is important during the early stages of 50S assembly. This Haloquadratum walsbyi (strain DSM 16790 / HBSQ001) protein is Large ribosomal subunit protein uL13.